A 266-amino-acid polypeptide reads, in one-letter code: Small ribosomal subunit protein uS2 (266 aa).

Residues 227-266 (GVSFTEETPSEPIQSDSSEEEEGSLDISDLFEDTDLKEEE) form a disordered region. The segment covering 231 to 240 (TEETPSEPIQ) has biased composition (polar residues). Acidic residues predominate over residues 243 to 266 (SSEEEEGSLDISDLFEDTDLKEEE).

Belongs to the universal ribosomal protein uS2 family.

The protein is Small ribosomal subunit protein uS2 of Pseudothermotoga lettingae (strain ATCC BAA-301 / DSM 14385 / NBRC 107922 / TMO) (Thermotoga lettingae).